Here is a 120-residue protein sequence, read N- to C-terminus: Inner membrane protein YidG (120 aa).

Residues 1 to 21 (MPDSRKARRIADPGLQPERTS) lie on the Cytoplasmic side of the membrane. A helical membrane pass occupies residues 22–39 (LAWFRTMLGYGALMALAI). The Periplasmic segment spans residues 40-48 (KHNWHQAGM). Residues 49–68 (LFWISIGILAIVALILWHYT) traverse the membrane as a helical segment. Residues 69 to 90 (RNRNLMDVTNSDFSQFHVVRDK) lie on the Cytoplasmic side of the membrane. A helical membrane pass occupies residues 91–113 (FLISLAVLSLAILFAVTHIHQLI). Residues 114 to 120 (VFIERVA) lie on the Periplasmic side of the membrane.

The protein resides in the cell inner membrane. The chain is Inner membrane protein YidG (yidG) from Escherichia coli O157:H7.